Here is a 332-residue protein sequence, read N- to C-terminus: Glycerol-3-phosphate dehydrogenase [NAD(P)+] (332 aa).

NADPH-binding residues include serine 11, phenylalanine 12, lysine 32, and lysine 106. The sn-glycerol 3-phosphate site is built by lysine 106, glycine 137, and serine 139. Alanine 141 contacts NADPH. Residues lysine 192, aspartate 245, serine 255, arginine 256, and asparagine 257 each contribute to the sn-glycerol 3-phosphate site. Lysine 192 acts as the Proton acceptor in catalysis. Residue arginine 256 participates in NADPH binding. NADPH contacts are provided by valine 280 and glutamate 282.

This sequence belongs to the NAD-dependent glycerol-3-phosphate dehydrogenase family.

The protein localises to the cytoplasm. It catalyses the reaction sn-glycerol 3-phosphate + NAD(+) = dihydroxyacetone phosphate + NADH + H(+). The enzyme catalyses sn-glycerol 3-phosphate + NADP(+) = dihydroxyacetone phosphate + NADPH + H(+). The protein operates within membrane lipid metabolism; glycerophospholipid metabolism. Catalyzes the reduction of the glycolytic intermediate dihydroxyacetone phosphate (DHAP) to sn-glycerol 3-phosphate (G3P), the key precursor for phospholipid synthesis. The chain is Glycerol-3-phosphate dehydrogenase [NAD(P)+] from Staphylococcus aureus (strain Mu3 / ATCC 700698).